The sequence spans 70 residues: Small ribosomal subunit protein bS21B (70 aa).

It belongs to the bacterial ribosomal protein bS21 family.

This Rhizobium meliloti (strain 1021) (Ensifer meliloti) protein is Small ribosomal subunit protein bS21B (rpsU2).